The sequence spans 359 residues: Alanine racemase (359 aa).

The active-site Proton acceptor; specific for D-alanine is Lys35. N6-(pyridoxal phosphate)lysine is present on Lys35. Arg131 provides a ligand contact to substrate. Catalysis depends on Tyr253, which acts as the Proton acceptor; specific for L-alanine. Met301 serves as a coordination point for substrate.

It belongs to the alanine racemase family. Requires pyridoxal 5'-phosphate as cofactor.

The enzyme catalyses L-alanine = D-alanine. It participates in amino-acid biosynthesis; D-alanine biosynthesis; D-alanine from L-alanine: step 1/1. Its function is as follows. Catalyzes the interconversion of L-alanine and D-alanine. May also act on other amino acids. The chain is Alanine racemase (alr) from Laribacter hongkongensis (strain HLHK9).